A 628-amino-acid polypeptide reads, in one-letter code: Glutamine--fructose-6-phosphate aminotransferase [isomerizing] (628 aa).

The Nucleophile; for GATase activity role is filled by Cys2. In terms of domain architecture, Glutamine amidotransferase type-2 spans 2-229 (CGIVGYVGHR…QDQAVVLTAD (228 aa)). The disordered stretch occupies residues 61 to 94 (ETDSNDGDGLGGSTGLGHTRWATHGRPTDRNAHP). SIS domains lie at 301–440 (SDQE…ARGT) and 473–618 (LAER…VDKP). The active-site For Fru-6P isomerization activity is the Lys623.

As to quaternary structure, homodimer.

Its subcellular location is the cytoplasm. It carries out the reaction D-fructose 6-phosphate + L-glutamine = D-glucosamine 6-phosphate + L-glutamate. In terms of biological role, catalyzes the first step in hexosamine metabolism, converting fructose-6P into glucosamine-6P using glutamine as a nitrogen source. In Mycolicibacterium smegmatis (strain ATCC 700084 / mc(2)155) (Mycobacterium smegmatis), this protein is Glutamine--fructose-6-phosphate aminotransferase [isomerizing].